Consider the following 136-residue polypeptide: Transmembrane protein 203 (136 aa).

Helical transmembrane passes span 14–34 (FAQLEIFLHIWALLVFTVLLA), 50–72 (FIPFFTADGLSTYFTTIVTVRLF), 81–101 (VLRLFWILTILSLKFVFEMLL), and 112–132 (LWFGLIMSPVFILLQLLMIRA).

The protein resides in the endoplasmic reticulum membrane. It localises to the endoplasmic reticulum-Golgi intermediate compartment. Involved in the regulation of cellular calcium homeotasis. May act as a regulator of STING-mediated inflammatory signaling in macrophages. The protein is Transmembrane protein 203 (tmem203) of Xenopus tropicalis (Western clawed frog).